The chain runs to 101 residues: NADH-quinone oxidoreductase subunit K (101 aa).

Helical transmembrane passes span 4–24 (LGHM…GIFL), 30–50 (IVLL…FVGF), and 62–82 (FVFF…AILV).

The protein belongs to the complex I subunit 4L family. As to quaternary structure, NDH-1 is composed of 14 different subunits. Subunits NuoA, H, J, K, L, M, N constitute the membrane sector of the complex.

It is found in the cell inner membrane. It catalyses the reaction a quinone + NADH + 5 H(+)(in) = a quinol + NAD(+) + 4 H(+)(out). Its function is as follows. NDH-1 shuttles electrons from NADH, via FMN and iron-sulfur (Fe-S) centers, to quinones in the respiratory chain. The immediate electron acceptor for the enzyme in this species is believed to be ubiquinone. Couples the redox reaction to proton translocation (for every two electrons transferred, four hydrogen ions are translocated across the cytoplasmic membrane), and thus conserves the redox energy in a proton gradient. The sequence is that of NADH-quinone oxidoreductase subunit K from Stenotrophomonas maltophilia (strain K279a).